Reading from the N-terminus, the 46-residue chain is Iota-conotoxin RXIA (46 aa).

A 4-hydroxyproline; partial mark is found at Pro-2 and Pro-11. Disulfide bonds link Cys-5/Cys-19, Cys-12/Cys-22, Cys-18/Cys-27, and Cys-21/Cys-38. Position 29 is a 4-hydroxyproline (Pro-29). Residue Phe-44 is modified to D-phenylalanine.

The protein belongs to the conotoxin I1 superfamily. The natural D-Phe-44 form of the peptide is more potent than the L-Phe-44 form. In terms of tissue distribution, expressed by the venom duct.

The protein localises to the secreted. Its function is as follows. Iota-conotoxins bind to voltage-gated sodium channels and act as agonists by shifting the voltage-dependence of activation to more hyperpolarized levels. This toxin acts on Nav1.6/SCN8A &gt; Nav1.2/SCN2A &gt; Nav1.7/SCN9A sodium channels. Produces general excitatory symptoms upon intracorporeal injection and repetitive action potentials in the frog cutaneous pectoris muscle. Natural peptide (with D-Phe) is active on nerve, but not on muscle. Synthetic peptide (with L-Phe) is not active on both nerve and muscle. This is Iota-conotoxin RXIA from Conus radiatus (Rayed cone).